A 504-amino-acid chain; its full sequence is Galactose/methyl galactoside import ATP-binding protein MglA (504 aa).

2 consecutive ABC transporter domains span residues 8 to 247 (LEMN…VGRD) and 258 to 504 (TPGE…TRFI). ATP is bound at residue 40–47 (GENGAGKS).

Belongs to the ABC transporter superfamily. Galactose/methyl galactoside importer (TC 3.A.1.2.3) family. The complex is composed of one ATP-binding protein (MglA), two transmembrane proteins (MglC) and a solute-binding protein (MglB).

It is found in the cell membrane. It carries out the reaction D-galactose(out) + ATP + H2O = D-galactose(in) + ADP + phosphate + H(+). The catalysed reaction is methyl beta-D-galactoside(out) + ATP + H2O = methyl beta-D-galactoside(in) + ADP + phosphate + H(+). Its function is as follows. Part of the ABC transporter complex MglABC involved in galactose/methyl galactoside import. Responsible for energy coupling to the transport system. The protein is Galactose/methyl galactoside import ATP-binding protein MglA of Clostridium tetani (strain Massachusetts / E88).